We begin with the raw amino-acid sequence, 345 residues long: Glycosyltransferase 1 domain-containing protein 1 (345 aa).

Positions 1–19 (MKILFLACLRAHTGNSTTA) are cleaved as a signal peptide. Asn-246 and Asn-322 each carry an N-linked (GlcNAc...) asparagine glycan.

Belongs to the glycosyltransferase group 1 family. Glycosyltransferase 4 subfamily.

The protein resides in the secreted. This is Glycosyltransferase 1 domain-containing protein 1 (glt1d1) from Xenopus tropicalis (Western clawed frog).